Here is a 175-residue protein sequence, read N- to C-terminus: uncharacterized protein (175 aa).

This is an uncharacterized protein from Treponema pallidum (strain Nichols).